The chain runs to 166 residues: Mitochondrial fission process protein 1 (166 aa).

The next 2 helical transmembrane spans lie at S34–A54 and A78–F98. An N6-succinyllysine modification is found at K123. The helical transmembrane segment at L129–L149 threads the bilayer.

This sequence belongs to the MTFP1 family.

The protein localises to the mitochondrion inner membrane. Its function is as follows. Involved in the mitochondrial division probably by regulating membrane fission. Loss-of-function leads to apoptosis. This Mus musculus (Mouse) protein is Mitochondrial fission process protein 1 (Mtfp1).